Reading from the N-terminus, the 144-residue chain is Gonadotropin subunit beta-2 (144 aa).

The N-terminal stretch at 1-27 (MGTPVKILVVRNHILFSVVVLLAVAQS) is a signal peptide. 6 cysteine pairs are disulfide-bonded: Cys-33/Cys-81, Cys-47/Cys-96, Cys-50/Cys-134, Cys-58/Cys-112, Cys-62/Cys-114, and Cys-117/Cys-124. The N-linked (GlcNAc...) asparagine glycan is linked to Asn-37. A propeptide spanning residues 143–144 (VY) is cleaved from the precursor.

The protein belongs to the glycoprotein hormones subunit beta family. In terms of assembly, heterodimer of an alpha and a beta chain.

The protein localises to the secreted. Its function is as follows. Involved in gametogenesis and steroidogenesis. This is Gonadotropin subunit beta-2 (cgbb) from Cyprinus carpio (Common carp).